Consider the following 2351-residue polypeptide: Protein FAM186A (2351 aa).

Residues E296–L340 are a coiled coil. Disordered regions lie at residues E412–R460, E470–K489, E505–G538, Q593–S667, S809–S838, L868–E976, G1805–P1837, and F1888–G1907. Basic and acidic residues predominate over residues D433 to F446. The segment covering S472 to K484 has biased composition (polar residues). Residues M506–A520 are compositionally biased toward basic and acidic residues. Residues L527–G538 are compositionally biased toward polar residues. Positions G603–I612 are enriched in basic residues. 2 stretches are compositionally biased toward basic and acidic residues: residues S619–K632 and Q812–Q823. A coiled-coil region spans residues Q812–N860. Residues E824–S838 show a composition bias toward polar residues. Composition is skewed to basic and acidic residues over residues A901–Q912, L939–H955, and K964–E976. Pro residues predominate over residues P1816 to G1835. Residues A1894–G1907 show a composition bias toward polar residues.

It belongs to the FAM186 family.

The chain is Protein FAM186A (FAM186A) from Homo sapiens (Human).